Reading from the N-terminus, the 213-residue chain is RNA pyrophosphohydrolase (213 aa).

Residues 6–149 (GFRPNVGIVL…KRGVYEIALT (144 aa)) enclose the Nudix hydrolase domain. Positions 38–59 (GGIDRGETPEQAMIRELHEEVG) match the Nudix box motif. The segment at 185–213 (NFELPPGGSFEPNPQTSYGLDASGKPHET) is disordered.

The protein belongs to the Nudix hydrolase family. RppH subfamily. A divalent metal cation serves as cofactor.

In terms of biological role, accelerates the degradation of transcripts by removing pyrophosphate from the 5'-end of triphosphorylated RNA, leading to a more labile monophosphorylated state that can stimulate subsequent ribonuclease cleavage. This is RNA pyrophosphohydrolase from Albidiferax ferrireducens (strain ATCC BAA-621 / DSM 15236 / T118) (Rhodoferax ferrireducens).